Consider the following 110-residue polypeptide: Small ribosomal subunit protein uS10 (110 aa).

Belongs to the universal ribosomal protein uS10 family. Part of the 30S ribosomal subunit.

Its function is as follows. Involved in the binding of tRNA to the ribosomes. This Coxiella burnetii (strain Dugway 5J108-111) protein is Small ribosomal subunit protein uS10.